A 142-amino-acid chain; its full sequence is Transcriptional regulator MraZ (142 aa).

SpoVT-AbrB domains are found at residues 5–51 (ASAL…PRPE) and 77–120 (AMDV…DSQT).

This sequence belongs to the MraZ family. As to quaternary structure, forms oligomers.

The protein localises to the cytoplasm. It localises to the nucleoid. The chain is Transcriptional regulator MraZ from Burkholderia ambifaria (strain MC40-6).